The primary structure comprises 102 residues: NADH-quinone oxidoreductase subunit K (102 aa).

Helical transmembrane passes span 5–25, 31–51, and 66–86; these read IAHY…GIFL, IVIL…FVAF, and FVLT…VVFF.

Belongs to the complex I subunit 4L family. In terms of assembly, NDH-1 is composed of 14 different subunits. Subunits NuoA, H, J, K, L, M, N constitute the membrane sector of the complex.

It is found in the cell inner membrane. It catalyses the reaction a quinone + NADH + 5 H(+)(in) = a quinol + NAD(+) + 4 H(+)(out). In terms of biological role, NDH-1 shuttles electrons from NADH, via FMN and iron-sulfur (Fe-S) centers, to quinones in the respiratory chain. The immediate electron acceptor for the enzyme in this species is believed to be ubiquinone. Couples the redox reaction to proton translocation (for every two electrons transferred, four hydrogen ions are translocated across the cytoplasmic membrane), and thus conserves the redox energy in a proton gradient. The chain is NADH-quinone oxidoreductase subunit K from Brucella abortus (strain S19).